The primary structure comprises 364 residues: Aromatic prenyltransferase (364 aa).

An N-terminal signal peptide occupies residues 1–22; the sequence is MDRNQWTLALMALMRFAHRAFI. N-linked (GlcNAc...) asparagine glycosylation is found at N142 and N337.

The protein belongs to the aromatic prenyltransferase family.

In terms of biological role, prenyltransferase that attaches isoprenoid moieties to carbon atoms of aromatic substrates in an enzyme-catalyzed Friedel-Crafts reaction. The chain is Aromatic prenyltransferase from Talaromyces marneffei (strain ATCC 18224 / CBS 334.59 / QM 7333) (Penicillium marneffei).